The sequence spans 79 residues: MISFALLLMTGVESVRDAYIAKPENCVYHCATNEGCNKLCTDNGAESGYCQWGGRYGNACWCIKLPDRVPIRVPGKCHR.

An N-terminal signal peptide occupies residues 1–14; the sequence is MISFALLLMTGVES. The 63-residue stretch at 16–78 folds into the LCN-type CS-alpha/beta domain; sequence RDAYIAKPEN…VPIRVPGKCH (63 aa). 4 cysteine pairs are disulfide-bonded: cysteine 26-cysteine 77, cysteine 30-cysteine 50, cysteine 36-cysteine 60, and cysteine 40-cysteine 62. Arginine 79 is a propeptide (removed by a carboxypeptidase).

The protein belongs to the long (4 C-C) scorpion toxin superfamily. Sodium channel inhibitor family. Alpha subfamily. Expressed by the venom gland.

Its subcellular location is the secreted. Functionally, binds to sodium channels (Nav) and inhibits the inactivation of the activated channels, thereby blocking neuronal transmission. This toxin is active against mammals. This is Neurotoxin BmK-M9 from Olivierus martensii (Manchurian scorpion).